The chain runs to 431 residues: Gamma-glutamyl phosphate reductase (431 aa).

Belongs to the gamma-glutamyl phosphate reductase family.

The protein localises to the cytoplasm. The enzyme catalyses L-glutamate 5-semialdehyde + phosphate + NADP(+) = L-glutamyl 5-phosphate + NADPH + H(+). Its pathway is amino-acid biosynthesis; L-proline biosynthesis; L-glutamate 5-semialdehyde from L-glutamate: step 2/2. Catalyzes the NADPH-dependent reduction of L-glutamate 5-phosphate into L-glutamate 5-semialdehyde and phosphate. The product spontaneously undergoes cyclization to form 1-pyrroline-5-carboxylate. The chain is Gamma-glutamyl phosphate reductase from Acaryochloris marina (strain MBIC 11017).